We begin with the raw amino-acid sequence, 945 residues long: UvrABC system protein A (945 aa).

ATP is bound at residue 31 to 38 (GLSGSGKS). A C4-type zinc finger spans residues 254–281 (CPVCGHSISELEPKLFSFNNPAGACPTC). ABC transporter domains are found at residues 310 to 587 (WDRR…PDSL) and 607 to 937 (RDKK…HFLK). Position 640–647 (640–647 (GVSGSGKS)) interacts with ATP. Residues 740–766 (CEACQGDGVIKVEMHFLPDIYVPCDVC) form a C4-type zinc finger.

Belongs to the ABC transporter superfamily. UvrA family. In terms of assembly, forms a heterotetramer with UvrB during the search for lesions.

The protein localises to the cytoplasm. Functionally, the UvrABC repair system catalyzes the recognition and processing of DNA lesions. UvrA is an ATPase and a DNA-binding protein. A damage recognition complex composed of 2 UvrA and 2 UvrB subunits scans DNA for abnormalities. When the presence of a lesion has been verified by UvrB, the UvrA molecules dissociate. In Pseudomonas aeruginosa (strain ATCC 15692 / DSM 22644 / CIP 104116 / JCM 14847 / LMG 12228 / 1C / PRS 101 / PAO1), this protein is UvrABC system protein A.